The following is a 150-amino-acid chain: SsrA-binding protein (150 aa).

Belongs to the SmpB family.

It localises to the cytoplasm. Required for rescue of stalled ribosomes mediated by trans-translation. Binds to transfer-messenger RNA (tmRNA), required for stable association of tmRNA with ribosomes. tmRNA and SmpB together mimic tRNA shape, replacing the anticodon stem-loop with SmpB. tmRNA is encoded by the ssrA gene; the 2 termini fold to resemble tRNA(Ala) and it encodes a 'tag peptide', a short internal open reading frame. During trans-translation Ala-aminoacylated tmRNA acts like a tRNA, entering the A-site of stalled ribosomes, displacing the stalled mRNA. The ribosome then switches to translate the ORF on the tmRNA; the nascent peptide is terminated with the 'tag peptide' encoded by the tmRNA and targeted for degradation. The ribosome is freed to recommence translation, which seems to be the essential function of trans-translation. In Borrelia garinii subsp. bavariensis (strain ATCC BAA-2496 / DSM 23469 / PBi) (Borreliella bavariensis), this protein is SsrA-binding protein.